The chain runs to 315 residues: Ribosomal RNA small subunit methyltransferase H (315 aa).

S-adenosyl-L-methionine-binding positions include 37-39, D57, D105, and Q112; that span reads GGH.

Belongs to the methyltransferase superfamily. RsmH family.

It localises to the cytoplasm. It carries out the reaction cytidine(1402) in 16S rRNA + S-adenosyl-L-methionine = N(4)-methylcytidine(1402) in 16S rRNA + S-adenosyl-L-homocysteine + H(+). Specifically methylates the N4 position of cytidine in position 1402 (C1402) of 16S rRNA. This is Ribosomal RNA small subunit methyltransferase H from Nitrosococcus oceani (strain ATCC 19707 / BCRC 17464 / JCM 30415 / NCIMB 11848 / C-107).